A 439-amino-acid polypeptide reads, in one-letter code: Tol-Pal system protein TolB (439 aa).

Positions 1 to 22 (MKKPLRWLAALTVLLLPLSALA) are cleaved as a signal peptide.

Belongs to the TolB family. As to quaternary structure, the Tol-Pal system is composed of five core proteins: the inner membrane proteins TolA, TolQ and TolR, the periplasmic protein TolB and the outer membrane protein Pal. They form a network linking the inner and outer membranes and the peptidoglycan layer.

The protein resides in the periplasm. Part of the Tol-Pal system, which plays a role in outer membrane invagination during cell division and is important for maintaining outer membrane integrity. This chain is Tol-Pal system protein TolB, found in Xanthomonas oryzae pv. oryzae (strain MAFF 311018).